Here is a 158-residue protein sequence, read N- to C-terminus: Disease resistance response protein Pi49 (158 aa).

Belongs to the BetVI family.

The protein is Disease resistance response protein Pi49 (DRR49A) of Pisum sativum (Garden pea).